The primary structure comprises 348 residues: GMP reductase (348 aa).

Residue 108-131 coordinates NADP(+); the sequence is ADFIKLRQILALSPSLKFICIDVA. K(+) is bound by residues Gly-181 and Gly-183. Residue Cys-186 is the Thioimidate intermediate of the active site. 216-239 is an NADP(+) binding site; the sequence is IVSDGGCTMPGDVAKAFGGGADFV.

This sequence belongs to the IMPDH/GMPR family. GuaC type 1 subfamily. In terms of assembly, homotetramer.

The catalysed reaction is IMP + NH4(+) + NADP(+) = GMP + NADPH + 2 H(+). Functionally, catalyzes the irreversible NADPH-dependent deamination of GMP to IMP. It functions in the conversion of nucleobase, nucleoside and nucleotide derivatives of G to A nucleotides, and in maintaining the intracellular balance of A and G nucleotides. The sequence is that of GMP reductase from Edwardsiella ictaluri (strain 93-146).